Consider the following 207-residue polypeptide: HTH-type transcriptional regulator AqdR (207 aa).

One can recognise an HTH tetR-type domain in the interval 16-76 (ARFRERVLDA…DALLTRTQAE (61 aa)). The H-T-H motif DNA-binding region spans 39–58 (GFADVARKAGVNGVSLYRRW).

In terms of biological role, may regulate the expression of genes involved in the degradation of the Pseudomonas aeruginosa quorum sensing signal molecules HHQ (2-heptyl-4-quinolone) and PQS (2-heptyl-3-hydroxy-4-quinolone). This is HTH-type transcriptional regulator AqdR from Rhodococcus erythropolis (Arthrobacter picolinophilus).